An 856-amino-acid chain; its full sequence is MSSDAPERFDPETGIAAEVETARIEREMEQSYIDYAMSVIAGRALPDARDGLKPVHRRILYAMHQSGISARSAHRKSSSIVGETMGDYHPHGDSAIYNALARMAQDFSMRNPLVDGQGNFGSVDGDPPAAMRYTEARMSPIAEELLDNIEMDTVEFTANYDDRLSEPAVLPAAFPNLLVNGSSGIAVGMSTNIPPHNLGEVIDATIHLIHHPECTVEDLMNHVQGPDFPTGANIVGQNAIYKAYKTGRGRVRVRAEFDVQDDRIVITELPFQTNKARLVERIADNVNAGTIEGIRDLRDESDRDGIRVVVELKRGANPDIVKNQLLEHHLESTFGVINLALVDGQPQVLTLKETLHEYLEHRRTVVRRRSQYELDEKRDRAHILEGRLRALEQVDDVVDIIRNSTDRDNAKAALRGEHVVESDERGESLPTFDFSEDQANHIVAMQLGSLTSLESDEIEDEYESVQERIERLQTILNNPDELDAVVEDELATIRDKYADERRTRIIEDDGTVTHEDLIAQEDVVVVVTEDDYIKRMSLEDFRSQHRGGKGIIGTSLKDGDTVSSVYVANTHDYLLYFTSHGQVYQLKTYQIPEMSRTARGKSAVNLLELDDGEQITAVVNTAEMDIDDDEERYFTMVTQSGYIKRTSVNSFQNIRSTGIIAISLGADDKLIDVEVTDGNRDIILGTRKGMAIRFNEGDVRSVGRSARGVHGIKLEDTDAVAALAAVDDDQDDWVLTVTEHGYGKRTDIDRYRQQSRNGKGLIDIKTNERNGHVCEVETVGISDELFMMSRKGQILRTPVDDISTVGRNTMGVIVMDLEDTDTVASVDTHPRTDDSSEADSGDGESESENATATTPS.

The region spanning 45–517 (LPDARDGLKP…DDGTVTHEDL (473 aa)) is the Topo IIA-type catalytic domain. Tyr133 acts as the O-(5'-phospho-DNA)-tyrosine intermediate in catalysis. The GyrA-box motif lies at 544–550 (QHRGGKG). Positions 822–856 (TVASVDTHPRTDDSSEADSGDGESESENATATTPS) are disordered. The segment covering 835 to 847 (SSEADSGDGESES) has biased composition (acidic residues).

This sequence belongs to the type II topoisomerase GyrA/ParC subunit family. As to quaternary structure, heterotetramer, composed of two GyrA and two GyrB chains. In the heterotetramer, GyrA contains the active site tyrosine that forms a transient covalent intermediate with DNA, while GyrB binds cofactors and catalyzes ATP hydrolysis.

It is found in the cytoplasm. The catalysed reaction is ATP-dependent breakage, passage and rejoining of double-stranded DNA.. In terms of biological role, a type II topoisomerase that negatively supercoils closed circular double-stranded (ds) DNA in an ATP-dependent manner to modulate DNA topology and maintain chromosomes in an underwound state. Negative supercoiling favors strand separation, and DNA replication, transcription, recombination and repair, all of which involve strand separation. Also able to catalyze the interconversion of other topological isomers of dsDNA rings, including catenanes and knotted rings. Type II topoisomerases break and join 2 DNA strands simultaneously in an ATP-dependent manner. This chain is DNA gyrase subunit A, found in Haloquadratum walsbyi (strain DSM 16790 / HBSQ001).